We begin with the raw amino-acid sequence, 126 residues long: Small ribosomal subunit protein bS6 (126 aa).

The protein belongs to the bacterial ribosomal protein bS6 family.

Binds together with bS18 to 16S ribosomal RNA. This is Small ribosomal subunit protein bS6 from Actinobacillus succinogenes (strain ATCC 55618 / DSM 22257 / CCUG 43843 / 130Z).